Consider the following 303-residue polypeptide: E3 ubiquitin-protein ligase CCNB1IP1 homolog (303 aa).

The RING-type; degenerate zinc-finger motif lies at 3-42 (CNACWRELEGQAVSTTCGHLLCTEDAKKILSNDAACPICD). The stretch at 119-184 (LEEVHTAYQK…YESAKRSAIQ (66 aa)) forms a coiled coil. The tract at residues 201–268 (VPNIMDSSDP…DIRPRQPARP (68 aa)) is disordered.

In terms of assembly, interacts with ZIP4 and PTD. In terms of tissue distribution, expressed in young panicles.

The protein localises to the nucleus. It is found in the chromosome. It carries out the reaction S-ubiquitinyl-[E2 ubiquitin-conjugating enzyme]-L-cysteine + [acceptor protein]-L-lysine = [E2 ubiquitin-conjugating enzyme]-L-cysteine + N(6)-ubiquitinyl-[acceptor protein]-L-lysine.. The protein operates within protein modification; protein ubiquitination. In terms of biological role, ubiquitin E3 ligase required for class I crossover (CO) formation during meiosis. The chain is E3 ubiquitin-protein ligase CCNB1IP1 homolog from Oryza sativa subsp. japonica (Rice).